The primary structure comprises 127 residues: Holo-[acyl-carrier-protein] synthase (127 aa).

Positions 9 and 58 each coordinate Mg(2+).

Belongs to the P-Pant transferase superfamily. AcpS family. It depends on Mg(2+) as a cofactor.

It is found in the cytoplasm. The catalysed reaction is apo-[ACP] + CoA = holo-[ACP] + adenosine 3',5'-bisphosphate + H(+). Its function is as follows. Transfers the 4'-phosphopantetheine moiety from coenzyme A to a Ser of acyl-carrier-protein. The chain is Holo-[acyl-carrier-protein] synthase from Shewanella sp. (strain MR-7).